We begin with the raw amino-acid sequence, 94 residues long: UPF0213 protein BH0048 (94 aa).

One can recognise a GIY-YIG domain in the interval 1–76; sequence MNHYVYILEC…KHLSRRKKEQ (76 aa).

Belongs to the UPF0213 family.

This chain is UPF0213 protein BH0048, found in Halalkalibacterium halodurans (strain ATCC BAA-125 / DSM 18197 / FERM 7344 / JCM 9153 / C-125) (Bacillus halodurans).